A 493-amino-acid chain; its full sequence is Keratin, type II cuticular Hb3 (493 aa).

Positions 1–111 (MTCGFSTVGS…PNAQCVKQEE (111 aa)) are head. Positions 111 to 422 (EKEQIKCLNN…RLLEGEEQRL (312 aa)) constitute an IF rod domain. Positions 112 to 146 (KEQIKCLNNRFAAFIDKVRFLEQQNKLLETKLQFY) are coil 1A. Positions 147-156 (QNRQCCESNL) are linker 1. Residues 157–257 (EPLFEGYIET…YEEEIRVLQA (101 aa)) form a coil 1B region. A Glycyl lysine isopeptide (Lys-Gly) (interchain with G-Cter in SUMO1) cross-link involves residue Lys-217. Residues 258-274 (NISDTSVIVKMDNSRGL) form a linker 12 region. A coil 2 region spans residues 275-418 (NMDNIVAEIK…ATYRRLLEGE (144 aa)). Positions 419-493 (EQRLCEGVGA…GGGSCSLGRC (75 aa)) are tail.

This sequence belongs to the intermediate filament family. In terms of assembly, heterotetramer of two type I and two type II keratins.

This Bos taurus (Bovine) protein is Keratin, type II cuticular Hb3.